Consider the following 1177-residue polypeptide: Lysylphosphatidylglycerol biosynthesis bifunctional protein LysX (1177 aa).

Disordered stretches follow at residues 1–40 (MRRA…AKFV) and 61–85 (VTLA…PRNR). Residues 1-676 (MRRAGRSRQF…LLHHDGSAPD (676 aa)) are phosphatidylglycerol lysyltransferase. Residues 65 to 85 (SPGSRSGSGPRSGPRLGPRNR) show a composition bias toward low complexity. The next 6 membrane-spanning stretches (helical) occupy residues 93–113 (VPAA…LGSV), 135–155 (FPDT…ALTA), 159–179 (IAWL…VADI), 189–209 (IFGE…LVLA), 227–247 (AVLV…VELF), and 281–301 (VFLN…ATIV). The disordered stretch occupies residues 673–693 (SAPDVSGLRPERTDAEEARSR). The interval 677-1177 (VSGLRPERTD…TLPFPLAKPH (501 aa)) is lysine--tRNA ligase. The span at 681 to 693 (RPERTDAEEARSR) shows a compositional bias: basic and acidic residues. Residues 738-816 (ITVAGRILRI…SLIVTDWRMI (79 aa)) constitute a DNA-binding region (OB). Residues D1089 and E1096 each coordinate Mg(2+).

It in the N-terminal section; belongs to the LPG synthetase family. In the C-terminal section; belongs to the class-II aminoacyl-tRNA synthetase family. Mg(2+) serves as cofactor.

The protein resides in the cell membrane. It carries out the reaction tRNA(Lys) + L-lysine + ATP = L-lysyl-tRNA(Lys) + AMP + diphosphate. The enzyme catalyses L-lysyl-tRNA(Lys) + a 1,2-diacyl-sn-glycero-3-phospho-(1'-sn-glycerol) = a 1,2-diacyl-sn-glycero-3-phospho-1'-(3'-O-L-lysyl)-sn-glycerol + tRNA(Lys). In terms of biological role, catalyzes the production of L-lysyl-tRNA(Lys)transfer and the transfer of a lysyl group from L-lysyl-tRNA(Lys) to membrane-bound phosphatidylglycerol (PG), which produces lysylphosphatidylglycerol (LPG), one of the components of the bacterial membrane with a positive net charge. LPG synthesis contributes to the resistance to cationic antimicrobial peptides (CAMPs) and likely protects M.tuberculosis against the CAMPs produced by competiting microorganisms (bacteriocins). In fact, the modification of anionic phosphatidylglycerol with positively charged L-lysine results in repulsion of the peptides. This Mycolicibacterium paratuberculosis (strain ATCC BAA-968 / K-10) (Mycobacterium paratuberculosis) protein is Lysylphosphatidylglycerol biosynthesis bifunctional protein LysX (lysX).